Here is a 1050-residue protein sequence, read N- to C-terminus: MPIDSDDNVFDDDDDFIELLQDSSNQTSNVTNEIATDSTNSTNTRLVVPNNRLLEEIPVPKRILLGPTHHKIDYGNLDKYVYPSNFEVRDYQFNIVQRAFYHNLLVALPTGLGKTFIASTVMLNFLRWFPESKMIFVAPTKPLVAQQIKACCSITGIPSSKVAILLDKTRKNRGEIWDEKQVFFTTPQVVENDLASGLVDPKTIALLVIDEAHRAKGNYAYNNIVKFMDRFTNSYRILALTATPASDVDGVQEIIDNLNISKVEVRSEESIDIIKYMKRKRIIRRNIYQSDEIKECIDLLCTAIAPVLKVANGKGILEITDPSRINFFQCMDASRKIVANPTIPEGTKWSNFFTLQLLGVVGQCFRRLNVYGLRSFFSYFNEKYTEFMAKHSKKKSSNKLNADFYFSEPIKQLMKRIRTMIDDPKVFSHPKIEAMMEELDEFFTINNATDSKVIIFTEFRESALEIVRFIEKVGKNLKPHIFIGQAKERDKFDESNFGKKSKGKRVGKKQQDDSKSSSENAQINGMNQKLQKEIIKNFKQGTYNILVATSIGEEGLDIGEVDLIICYDSTSSPIKNIQRMGRTGRKRDGKVVLLFSSNEESKFDKAMNGYEYIQQHIMKGQLIDLKEQNRMIPKDWEPKVEMRFIEIPEENHELQVVDDEDEIIRIATQYMMGGKSKKKKAAASKKGKTKEKRAKQFFMPDNVEIGFRSVTSMVRAVGSSKSLEEEKKEEKVRDVLDRIVDSDSDEEIPLGSIPIPRSEVIAHKQSTTDEQLLERDCQSGSNISDRTLDQHHSASEERGINSNFSHESNLPTPPENSPPKRKSIVLEEARIAKKKHKKSLGIRKPTIRPPSIIDQLKKQKSKIIRPDSANETICLDEDDILLPEYTNITEKEVTVQEDRREIEHDDDSEIFDDGLDEQLAMIDDMNTTKSFVEPTRIDFKDEVFKNDFDEHEGFLNNDELMELHTSYFTAIDPMDKVFYYDPSSSVHVDGANREYAFYGKIGHSKRSQVLIGLQKRAHEMAAKSKQSKTATPSEPETFQNYLDSDFIALQ.

The Helicase ATP-binding domain occupies 95–262; sequence IVQRAFYHNL…EIIDNLNISK (168 aa). 108–115 is a binding site for ATP; sequence LPTGLGKT. The DEAH box signature appears at 210–213; sequence DEAH. Residues 431 to 631 enclose the Helicase C-terminal domain; it reads KIEAMMEELD…LIDLKEQNRM (201 aa). 2 disordered regions span residues 493 to 524 and 743 to 821; these read DESN…AQIN and DSDE…PPKR. Positions 499-508 are enriched in basic residues; the sequence is KKSKGKRVGK. The span at 786-799 shows a compositional bias: basic and acidic residues; the sequence is RTLDQHHSASEERG. Residues 800 to 810 show a composition bias toward polar residues; sequence INSNFSHESNL.

The protein belongs to the DEAD box helicase family. DEAH subfamily. FANCM sub-subfamily. As to quaternary structure, interacts with the MHF histone-fold complex to form the FANCM-MHF complex.

It localises to the nucleus. It carries out the reaction ATP + H2O = ADP + phosphate + H(+). In terms of biological role, ATP-dependent DNA helicase involved in DNA damage repair by homologous recombination and in genome maintenance. Capable of unwinding D-loops. Plays a role in limiting crossover recombinants during mitotic DNA double-strand break (DSB) repair. Component of a FANCM-MHF complex which promotes gene conversion at blocked replication forks, probably by reversal of the stalled fork. In Scheffersomyces stipitis (strain ATCC 58785 / CBS 6054 / NBRC 10063 / NRRL Y-11545) (Yeast), this protein is ATP-dependent DNA helicase MPH1.